Here is a 133-residue protein sequence, read N- to C-terminus: DNA-binding protein inhibitor ID-2-A (133 aa).

Residues 23–75 (ARSKTPVDDPMSLLYNMNDCYSKLKELVPSIPQNKKVSKMEILQHVIDYILDL) form the bHLH domain. The short motif at 106-115 (LNTDISILSL) is the Nuclear export signal element.

As to quaternary structure, heterodimer with other HLH proteins. In terms of tissue distribution, in the embryo, expressed in a range of tissues, with primary expression in the developing pronephros; expressed in the pronephric anlage, and by the swimming tadpole stages expressed robustly in the pronephric tubules and weakly in the pronephric duct. Expressed in the secondary heart field. In the developing nervous system, expressed in the neural crest and in the neural folds during neurula stages, and at stage 20 in the neural tube, ventral mesoderm and mid-hindbrain boundary. By early tailbud stages, expressed in the neural tube, somites and branchial arches. In tadpoles (stage 37/38), expressed in the heart, eye, otic vesicle, somites and branchial arches. Also expressed in migrating muscle cells. Expressed at a low level in limbs, with expression decreasing as limbs develop, but expressed at a high level in blastemas (regenerated limbs), where expression is localized primarily to the blastemal epidermis. Widely expressed in adults with highest expression in the spleen, skin, intestine and brain, and at a much lower level in testis and heart.

The protein resides in the cytoplasm. The protein localises to the nucleus. Transcriptional regulator (lacking a basic DNA binding domain) which negatively regulates the basic helix-loop-helix (bHLH) transcription factors by forming heterodimers and inhibiting their DNA binding and transcriptional activity. Inhibits the activity of both neurogenic (neurod1/neuroD) and myogenic (myod1/myoD) bHLH factors. May play a role in the regulation of the circadian clock. The chain is DNA-binding protein inhibitor ID-2-A (id2-a) from Xenopus laevis (African clawed frog).